A 122-amino-acid polypeptide reads, in one-letter code: Large ribosomal subunit protein uL14 (122 aa).

Belongs to the universal ribosomal protein uL14 family. As to quaternary structure, part of the 50S ribosomal subunit. Forms a cluster with proteins L3 and L19. In the 70S ribosome, L14 and L19 interact and together make contacts with the 16S rRNA in bridges B5 and B8.

Binds to 23S rRNA. Forms part of two intersubunit bridges in the 70S ribosome. This Helicobacter pylori (strain J99 / ATCC 700824) (Campylobacter pylori J99) protein is Large ribosomal subunit protein uL14.